Reading from the N-terminus, the 395-residue chain is MLLPQPKSTAKKPKGEAKSLVARERKSQPQDSALMEVPAKREMPKKEVKKIRSVHKVESVTKTKSAKLRRKKSYSLSSDNESKYKKSISPAASEEASIEKKKEEMTSKLPEKSVAMKTANSPKTFNMELAKKFFEMRMKESQRTSRMATKSDSSLETMPESSHNSGQSSKSRKSQRTRGKSTPLDRNIFKENGEPVWVVPDRKPGELVMNEHGEMVKYPELMAALEEDGLEMEDGKGWFQKMSSYLMGELDQGRIDNKAASKDINPFASMETLEERTDLYFSRETVIYNTTDSIFNLCHNAIERFSQQNNEDTIRKSVPPSREPGSKMMTVSKDEEEKTAIVTSIRFDARAYRISYDRRRPVHSIQKFRKKYQKQLKKSQEEKKDDTKTAKNEGD.

4 disordered regions span residues 1-121, 136-187, 308-335, and 365-395; these read MLLP…TANS, MRMK…LDRN, QNNE…SKDE, and IQKF…NEGD. Basic and acidic residues predominate over residues 13–28; that stretch reads PKGEAKSLVARERKSQ. The span at 64–73 shows a compositional bias: basic residues; the sequence is KSAKLRRKKS. Positions 97-111 are enriched in basic and acidic residues; the sequence is SIEKKKEEMTSKLPE. The span at 144–164 shows a compositional bias: polar residues; it reads TSRMATKSDSSLETMPESSHN. Residues 170 to 179 are compositionally biased toward basic residues; it reads KSRKSQRTRG. Basic residues predominate over residues 365–377; the sequence is IQKFRKKYQKQLK. Positions 378–395 are enriched in basic and acidic residues; sequence KSQEEKKDDTKTAKNEGD.

This is an uncharacterized protein from Caenorhabditis elegans.